We begin with the raw amino-acid sequence, 529 residues long: T-complex protein 1 subunit delta (529 aa).

It belongs to the TCP-1 chaperonin family. In terms of assembly, heterooligomeric complex of about 850 to 900 kDa that forms two stacked rings, 12 to 16 nm in diameter.

Its subcellular location is the cytoplasm. Molecular chaperone; assists the folding of proteins upon ATP hydrolysis. Known to play a role, in vitro, in the folding of actin and tubulin. The chain is T-complex protein 1 subunit delta (CCT4) from Candida glabrata (strain ATCC 2001 / BCRC 20586 / JCM 3761 / NBRC 0622 / NRRL Y-65 / CBS 138) (Yeast).